The chain runs to 285 residues: Seed agglutinin 2 (285 aa).

The N-terminal stretch at 1–31 (MASYKFKTQNSFLLLLSISFFFLLLLNKVNS) is a signal peptide. N-linked (GlcNAc...) asparagine glycosylation occurs at Asn-147. Residues Glu-156 and Asp-158 each coordinate Mn(2+). Asp-158, Asn-162, and Asp-166 together coordinate Ca(2+). 2 residues coordinate Mn(2+): Asp-166 and His-171.

Belongs to the leguminous lectin family. In terms of assembly, homotetramer. In terms of processing, mostly found in non-glycosylated form. Expressed in seed.

In terms of biological role, seed lectin. The sequence is that of Seed agglutinin 2 from Robinia pseudoacacia (Black locust).